The sequence spans 1323 residues: Lysine-specific demethylase 3A (1323 aa).

Disordered regions lie at residues 255 to 287, 307 to 337, and 385 to 416; these read TRTGAVKRKSSENNGSSVSKQAKSCSEASPSMC, ATPSSKDPRQQNTPQAANSPPNIGAKLPQGC, and SEPKGSCIQPKTNTDQESRLESAPQPVTGLPK. Phosphoserine is present on S264. 2 stretches are compositionally biased toward polar residues: residues 266-283 and 307-327; these read ENNGSSVSKQAKSCSEAS and ATPSSKDPRQQNTPQAANSPP. S325 is modified (phosphoserine). S446 bears the Phosphoserine mark. 2 disordered regions span residues 468-487 and 495-517; these read AEKKVEPSHLGSQSQNLKET and SCCTRSSNKTQTPPARKSVLTDP. Composition is skewed to polar residues over residues 477–486 and 495–507; these read LGSQSQNLKE and SCCTRSSNKTQTP. The C6-type zinc-finger motif lies at 662–687; that stretch reads CDVCDTTIFNLHWVCPRCGFGVCVDC. An LXXLL motif motif is present at residues 885–889; it reads LRNLL. K895 is modified (N6-acetyllysine). A JmjC domain is found at 1060-1283; that stretch reads MPSRFDDLMA…HCFWLTQEFR (224 aa). Fe cation is bound by residues H1122, D1124, and H1251.

This sequence belongs to the JHDM2 histone demethylase family. Interacts with VRK1. Fe(2+) serves as cofactor. Highly expressed in testis (at protein level). Also expressed at high levels in tissues responsive to sympathetic nerve activity such as brown adipose tissue and skeletal muscle.

The protein resides in the cytoplasm. It localises to the nucleus. It carries out the reaction N(6),N(6)-dimethyl-L-lysyl(9)-[histone H3] + 2 2-oxoglutarate + 2 O2 = L-lysyl(9)-[histone H3] + 2 formaldehyde + 2 succinate + 2 CO2. Functionally, histone demethylase that specifically demethylates 'Lys-9' of histone H3, thereby playing a central role in histone code. Preferentially demethylates mono- and dimethylated H3 'Lys-9' residue, with a preference for dimethylated residue, while it has weak or no activity on trimethylated H3 'Lys-9'. Demethylation of Lys residue generates formaldehyde and succinate. Involved in hormone-dependent transcriptional activation, by participating in recruitment to androgen-receptor target genes, resulting in H3 'Lys-9' demethylation and transcriptional activation. Involved in spermatogenesis by regulating expression of target genes such as PRM1 and TNP1 which are required for packaging and condensation of sperm chromatin. Involved in obesity resistance through regulation of metabolic genes such as PPARA and UCP1. The protein is Lysine-specific demethylase 3A (Kdm3a) of Mus musculus (Mouse).